We begin with the raw amino-acid sequence, 214 residues long: Fruiting body protein SC14 (214 aa).

Residues 1–18 (MKLNIAILLAALAATASA) form the signal peptide. N-linked (GlcNAc...) asparagine glycans are attached at residues Asn61 and Asn144. Positions 72-195 (LTAHNDERAQ…KSLWYYVCNY (124 aa)) constitute an SCP domain.

Belongs to the CRISP family.

Its subcellular location is the secreted. The sequence is that of Fruiting body protein SC14 (SC14) from Schizophyllum commune (Split gill fungus).